A 254-amino-acid polypeptide reads, in one-letter code: Imidazole glycerol phosphate synthase subunit HisF (254 aa).

Active-site residues include Asp-12 and Asp-131.

It belongs to the HisA/HisF family. Heterodimer of HisH and HisF.

Its subcellular location is the cytoplasm. The enzyme catalyses 5-[(5-phospho-1-deoxy-D-ribulos-1-ylimino)methylamino]-1-(5-phospho-beta-D-ribosyl)imidazole-4-carboxamide + L-glutamine = D-erythro-1-(imidazol-4-yl)glycerol 3-phosphate + 5-amino-1-(5-phospho-beta-D-ribosyl)imidazole-4-carboxamide + L-glutamate + H(+). The protein operates within amino-acid biosynthesis; L-histidine biosynthesis; L-histidine from 5-phospho-alpha-D-ribose 1-diphosphate: step 5/9. In terms of biological role, IGPS catalyzes the conversion of PRFAR and glutamine to IGP, AICAR and glutamate. The HisF subunit catalyzes the cyclization activity that produces IGP and AICAR from PRFAR using the ammonia provided by the HisH subunit. In Kocuria rhizophila (strain ATCC 9341 / DSM 348 / NBRC 103217 / DC2201), this protein is Imidazole glycerol phosphate synthase subunit HisF.